The primary structure comprises 325 residues: Cell division protein ZipA (325 aa).

The Periplasmic portion of the chain corresponds to 1-5; that stretch reads MQELR. Residues 6–26 traverse the membrane as a helical segment; sequence LVLILVGALAIAALLFHGLWT. At 27–325 the chain is on the cytoplasmic side; sequence SRKETSSKFG…KQRVKVFCRK (299 aa).

Belongs to the ZipA family. In terms of assembly, interacts with FtsZ via their C-terminal domains.

Its subcellular location is the cell inner membrane. In terms of biological role, essential cell division protein that stabilizes the FtsZ protofilaments by cross-linking them and that serves as a cytoplasmic membrane anchor for the Z ring. Also required for the recruitment to the septal ring of downstream cell division proteins. The sequence is that of Cell division protein ZipA from Aliivibrio fischeri (strain MJ11) (Vibrio fischeri).